The following is a 202-amino-acid chain: ATP-dependent Clp protease proteolytic subunit (202 aa).

Residue Ser-98 is the Nucleophile of the active site. His-123 is a catalytic residue.

The protein belongs to the peptidase S14 family. Fourteen ClpP subunits assemble into 2 heptameric rings which stack back to back to give a disk-like structure with a central cavity, resembling the structure of eukaryotic proteasomes.

It localises to the cytoplasm. The catalysed reaction is Hydrolysis of proteins to small peptides in the presence of ATP and magnesium. alpha-casein is the usual test substrate. In the absence of ATP, only oligopeptides shorter than five residues are hydrolyzed (such as succinyl-Leu-Tyr-|-NHMec, and Leu-Tyr-Leu-|-Tyr-Trp, in which cleavage of the -Tyr-|-Leu- and -Tyr-|-Trp bonds also occurs).. Its function is as follows. Cleaves peptides in various proteins in a process that requires ATP hydrolysis. Has a chymotrypsin-like activity. Plays a major role in the degradation of misfolded proteins. In Desulfovibrio desulfuricans (strain ATCC 27774 / DSM 6949 / MB), this protein is ATP-dependent Clp protease proteolytic subunit.